A 146-amino-acid polypeptide reads, in one-letter code: UPF0178 protein Helmi_09130 (146 aa).

The protein belongs to the UPF0178 family.

This chain is UPF0178 protein Helmi_09130, found in Heliobacterium modesticaldum (strain ATCC 51547 / Ice1).